Consider the following 563-residue polypeptide: MIASGADTQSDALVRQSAKVQFGDYQANGIMAAAKKLGRNPREFAQQVIEQLDLSEIAEKIEIAGPGFINLFLDKNWLAEQISLAVNDDKLGIQATETQTVVADYSSPNVAKEMHVGHLRSTIIGDAVVRTLEFLGNKVIRANHVGDWGTQFGMLIAYLEKVENESASEMELSDLEAFYRAAKEHYDSDPVFAEKARNYVVKLQSGDEYCRTMWKKLVDITMQQNQHNYDRLNVTLTEKDVMGESLYNPMLSDIVADLKQQGLAVEDEGAFVVYLDEFKNKEGEPMGVIVQKKDGGFLYTTTDIAAAKYRYETLKADRALVFSDTRQSQHMQQAWLITRKAGYVPDSFQLEHKNFGMMLGKDGKPFKTRTGGTVKLADLLDEAVERATQLIQEKSTALSAQEKAAVIEAVAIGSVKYADLSKNRTTDYVFDWDNMLSFEGNTAPYMQYAYTRIRSIFNRSELNEQDLSESPVVLSNEKERLLAIKLLQFEEAIQIVAKEGTPHVLCTYLYELAGVFSSFYEHCPILNNEDEQIKRSRLKLALLTEKTLKQGLDLLGIKTVDKM.

Positions Pro-108–His-118 match the 'HIGH' region motif.

This sequence belongs to the class-I aminoacyl-tRNA synthetase family. As to quaternary structure, monomer.

Its subcellular location is the cytoplasm. The catalysed reaction is tRNA(Arg) + L-arginine + ATP = L-arginyl-tRNA(Arg) + AMP + diphosphate. This chain is Arginine--tRNA ligase (argS), found in Pasteurella multocida (strain Pm70).